The following is a 173-amino-acid chain: Shikimate kinase (173 aa).

14–19 contacts ATP; that stretch reads GAGKST. Residue Ser-18 participates in Mg(2+) binding. Asp-36, Arg-60, and Gly-82 together coordinate substrate. An ATP-binding site is contributed by Arg-120. Arg-139 contributes to the substrate binding site. Gln-156 is a binding site for ATP.

This sequence belongs to the shikimate kinase family. Monomer. It depends on Mg(2+) as a cofactor.

Its subcellular location is the cytoplasm. It catalyses the reaction shikimate + ATP = 3-phosphoshikimate + ADP + H(+). Its pathway is metabolic intermediate biosynthesis; chorismate biosynthesis; chorismate from D-erythrose 4-phosphate and phosphoenolpyruvate: step 5/7. In terms of biological role, catalyzes the specific phosphorylation of the 3-hydroxyl group of shikimic acid using ATP as a cosubstrate. The protein is Shikimate kinase of Actinobacillus pleuropneumoniae serotype 5b (strain L20).